A 66-amino-acid chain; its full sequence is Heat-stable enterotoxin (66 aa).

The first 19 residues, 1–19 (MKKIVFVLVLMLSSFGTFG), serve as a signal peptide directing secretion. The propeptide occupies 20–50 (QETASRQFGDAFSTPIAAEVNKKACDTELPP). 3 disulfide bridges follow: cysteine 54–cysteine 59, cysteine 55–cysteine 63, and cysteine 58–cysteine 66.

The protein belongs to the heat-stable enterotoxin family.

The protein localises to the secreted. Functionally, toxin which activates the particulate form of guanylate cyclase and increases cyclic GMP levels within the host intestinal epithelial cells. In Yersinia kristensenii, this protein is Heat-stable enterotoxin (yst).